Reading from the N-terminus, the 125-residue chain is Acyl carrier protein, mitochondrial (125 aa).

Residues 1-36 constitute a mitochondrion transit peptide; sequence MFRSVCRISSRVAPSAYRTIMGRSVMSNTILAQRFY. The Carrier domain occupies 43 to 122; sequence DQVSQRVIDV…ETVDYIASNP (80 aa). S82 carries the post-translational modification O-(pantetheine 4'-phosphoryl)serine.

It belongs to the acyl carrier protein (ACP) family. In terms of assembly, complex I is composed of about 30 different subunits. Post-translationally, 4'-phosphopantetheine is transferred from CoA to a specific serine of apo-ACP by acpS. This modification is essential for activity because fatty acids are bound in thioester linkage to the sulfhydryl of the prosthetic group.

The protein localises to the mitochondrion. The protein operates within lipid metabolism; fatty acid biosynthesis. Functionally, carrier of the growing fatty acid chain in fatty acid biosynthesis. May be involved in the synthesis of very-long-chain fatty acids. Accessory and non-catalytic subunit of the mitochondrial membrane respiratory chain NADH dehydrogenase (Complex I), which functions in the transfer of electrons from NADH to the respiratory chain. The polypeptide is Acyl carrier protein, mitochondrial (ACP1) (Saccharomyces cerevisiae (strain ATCC 204508 / S288c) (Baker's yeast)).